Here is a 176-residue protein sequence, read N- to C-terminus: MDSDMQNQNPHTNSKNSSSAGMAVDGHSVTKRLRSELMSLMMSNTPGISAFPDSDSNLLHWAGTITGPSDTYYEGLKFKISMSFPANYPYSPPTIIFTSPMWHPNVDMSGNICLDILKDKWSAVYNVQTILLSLQSLLGEPNNASPLNAQAAELWSKDPIEYKRLLMQRYKEIDEI.

Polar residues predominate over residues 1-20 (MDSDMQNQNPHTNSKNSSSA). A disordered region spans residues 1–25 (MDSDMQNQNPHTNSKNSSSAGMAVD). A UBC core domain is found at 28-175 (SVTKRLRSEL…LMQRYKEIDE (148 aa)). The active-site Glycyl thioester intermediate is Cys-113.

This sequence belongs to the ubiquitin-conjugating enzyme family.

It carries out the reaction S-ubiquitinyl-[E1 ubiquitin-activating enzyme]-L-cysteine + [E2 ubiquitin-conjugating enzyme]-L-cysteine = [E1 ubiquitin-activating enzyme]-L-cysteine + S-ubiquitinyl-[E2 ubiquitin-conjugating enzyme]-L-cysteine.. It participates in protein modification; protein ubiquitination. Its function is as follows. Catalyzes the covalent attachment of ubiquitin to other proteins. This Schizosaccharomyces pombe (strain 972 / ATCC 24843) (Fission yeast) protein is Ubiquitin-conjugating enzyme E2-20 kDa (ubc11).